A 610-amino-acid polypeptide reads, in one-letter code: Ectonucleoside triphosphate diphosphohydrolase 7 (610 aa).

Residues 1 to 28 (MARISFSCLFPASWHCSLPSVTQFSRQR) lie on the Cytoplasmic side of the membrane. Residues 29–49 (VALLIISVAVFILVFAAVADL) form a helical membrane-spanning segment. Residues 50–555 (QLWSSRAFRD…VSWFRISFVY (506 aa)) lie on the Vesicular side of the membrane. The active-site Proton acceptor is Glu-217. N-linked (GlcNAc...) asparagine glycans are attached at residues Asn-336 and Asn-400. Cys-454 and Cys-483 are joined by a disulfide. Residues 556–576 (NHYLFFACILVVLLSIVLYIL) form a helical membrane-spanning segment. The Cytoplasmic segment spans residues 577-610 (RLRRIHRRQARASALDLLLMEEGVHTVLEPGIPT).

Belongs to the GDA1/CD39 NTPase family. The cofactor is Ca(2+). Mg(2+) is required as a cofactor.

It localises to the cytoplasmic vesicle membrane. It carries out the reaction a ribonucleoside 5'-triphosphate + H2O = a ribonucleoside 5'-diphosphate + phosphate + H(+). It catalyses the reaction UTP + H2O = UDP + phosphate + H(+). The catalysed reaction is GTP + H2O = GDP + phosphate + H(+). The enzyme catalyses CTP + H2O = CDP + phosphate + H(+). Its function is as follows. Catalyzes the hydrolysis of nucleoside triphosphates and diphosphates in a calcium- or magnesium-dependent manner. Preferentially hydrolyzes nucleoside 5'-triphosphates, with substrate preference for UTP &gt; GTP &gt; CTP. Hydrolyzes ATP and nucleoside diphosphates only to a minor extent. This is Ectonucleoside triphosphate diphosphohydrolase 7 (entpd7) from Xenopus tropicalis (Western clawed frog).